The sequence spans 268 residues: Esterase PIR7B (268 aa).

Ser-86 acts as the Acyl-ester intermediate in catalysis. Residues Asp-218 and His-246 each act as charge relay system in the active site.

This sequence belongs to the AB hydrolase superfamily.

Its function is as follows. Exhibits esterase activity towards naphthol AS-acetate in vitro. This is Esterase PIR7B (PIR7B) from Oryza sativa subsp. japonica (Rice).